Consider the following 77-residue polypeptide: Large ribosomal subunit protein uL29 (77 aa).

Belongs to the universal ribosomal protein uL29 family.

This is Large ribosomal subunit protein uL29 (rpmC) from Mycobacterium bovis (strain ATCC BAA-935 / AF2122/97).